An 887-amino-acid polypeptide reads, in one-letter code: Fibroblast growth factor receptor 2 (887 aa).

Positions 1-18 are cleaved as a signal peptide; it reads MLNKFIVIVTMLAMWNYA. Topologically, residues 19 to 416 are extracellular; it reads QDCNFELSKN…KDCVGNSYFT (398 aa). 2 Ig-like C2-type domains span residues 22–115 and 180–260; these read NFEL…EFIS and VSGS…LRMK. Asn-28, Asn-74, Asn-93, Asn-230, Asn-261, Asn-268, Asn-328, Asn-334, and Asn-364 each carry an N-linked (GlcNAc...) asparagine glycan. A disulfide bridge links Cys-43 with Cys-104. In terms of domain architecture, Ig-like C2-type 3 spans 297–387; it reads FNLNSRVCIN…YACRIINFKD (91 aa). Cys-313 and Cys-380 are disulfide-bonded. The helical transmembrane segment at 417 to 437 threads the bilayer; the sequence is IIWYSISVGIIILVVISFLII. The Cytoplasmic portion of the chain corresponds to 438–887; sequence RLYNKYSNGY…SNQCYSTTIV (450 aa). A Protein kinase domain is found at 585–862; that stretch reads LIIGSKIGEG…IIDKLTHIQL (278 aa). Residues 591-599 and Lys-619 each bind ATP; that span reads IGEGAFGIV. Catalysis depends on Asp-728, which acts as the Proton acceptor. Tyr-757 is subject to Phosphotyrosine; by autocatalysis.

The protein belongs to the protein kinase superfamily. Tyr protein kinase family. Fibroblast growth factor receptor subfamily. As to expression, expressed in brain, stem cells and the mesenchymal cells.

It localises to the membrane. It catalyses the reaction L-tyrosyl-[protein] + ATP = O-phospho-L-tyrosyl-[protein] + ADP + H(+). In terms of biological role, receptor for basic fibroblast growth factor. This Dugesia japonica (Planarian) protein is Fibroblast growth factor receptor 2 (FGFR2).